A 34-amino-acid polypeptide reads, in one-letter code: Phalloidin proprotein (34 aa).

Residues 1-10 (MSDINTTCLP) constitute a propeptide that is removed on maturation. Positions 11–17 (AWLATCP) form a cross-link, cyclopeptide (Ala-Pro). Positions 12–16 (WLATC) form a cross-link, 2'-cysteinyl-6'-hydroxytryptophan sulfoxide (Trp-Cys). Residues 18–34 (CTGDDVNPTLTCGESLC) constitute a propeptide that is removed on maturation.

This sequence belongs to the MSDIN fungal toxin family. Post-translationally, processed by the macrocyclase-peptidase enzyme POPB to yield a toxic cyclic heptapeptide. POPB first removes 10 residues from the N-terminus. Conformational trapping of the remaining peptide forces the enzyme to release this intermediate rather than proceed to macrocyclization. The enzyme rebinds the remaining peptide in a different conformation and catalyzes macrocyclization of the N-terminal 7 residues.

Functionally, toxin that belongs to the bicyclic heptapeptides called phallotoxins. Although structurally related to amatoxins, phallotoxins have a different mode of action, which is the stabilization of F-actin. Phallotoxins are poisonous when administered parenterally, but not orally because of poor absorption. The sequence is that of Phalloidin proprotein from Amanita phalloides (Death cap).